The primary structure comprises 182 residues: Large ribosomal subunit protein uL5 (182 aa).

It belongs to the universal ribosomal protein uL5 family. In terms of assembly, part of the 50S ribosomal subunit; part of the 5S rRNA/L5/L18/L25 subcomplex. Contacts the 5S rRNA and the P site tRNA. Forms a bridge to the 30S subunit in the 70S ribosome.

In terms of biological role, this is one of the proteins that bind and probably mediate the attachment of the 5S RNA into the large ribosomal subunit, where it forms part of the central protuberance. In the 70S ribosome it contacts protein S13 of the 30S subunit (bridge B1b), connecting the 2 subunits; this bridge is implicated in subunit movement. Contacts the P site tRNA; the 5S rRNA and some of its associated proteins might help stabilize positioning of ribosome-bound tRNAs. The polypeptide is Large ribosomal subunit protein uL5 (Borreliella afzelii (strain PKo) (Borrelia afzelii)).